The sequence spans 228 residues: ATP-dependent dethiobiotin synthetase BioD (228 aa).

12-17 is an ATP binding site; the sequence is EIGKTT. A Mg(2+)-binding site is contributed by Thr16. Lys37 is an active-site residue. Substrate is bound at residue Ser41. ATP-binding positions include Asp54, 116-119, and 205-207; these read EGAG and PRL. Residues Asp54 and Glu116 each contribute to the Mg(2+) site.

Belongs to the dethiobiotin synthetase family. Homodimer. It depends on Mg(2+) as a cofactor.

The protein resides in the cytoplasm. It carries out the reaction (7R,8S)-7,8-diammoniononanoate + CO2 + ATP = (4R,5S)-dethiobiotin + ADP + phosphate + 3 H(+). Its pathway is cofactor biosynthesis; biotin biosynthesis; biotin from 7,8-diaminononanoate: step 1/2. In terms of biological role, catalyzes a mechanistically unusual reaction, the ATP-dependent insertion of CO2 between the N7 and N8 nitrogen atoms of 7,8-diaminopelargonic acid (DAPA, also called 7,8-diammoniononanoate) to form a ureido ring. The polypeptide is ATP-dependent dethiobiotin synthetase BioD (Pseudomonas paraeruginosa (strain DSM 24068 / PA7) (Pseudomonas aeruginosa (strain PA7))).